A 568-amino-acid chain; its full sequence is Dual specificity tyrosine-phosphorylation-regulated kinase 3 (568 aa).

Residues 1 to 168 (MKWKEKLGDG…HGVIGGPNNG (168 aa)) form a disordered region. Over residues 77 to 114 (SNTVQSDGISDSEKCSPTVSQGKSSDCLNTVKSNSSSK) the composition is skewed to polar residues. The region spanning 189-502 (YEVLKIIGKG…PAQALRHPWI (314 aa)) is the Protein kinase domain. Residues 195-203 (IGKGSFGQV) and K218 contribute to the ATP site. The Proton acceptor role is filled by D315. A Phosphoserine modification is found at S330. Y349 bears the Phosphotyrosine mark. The Nuclear localization signal signature appears at 448–461 (RSRRGKKRGPPGSK).

Belongs to the protein kinase superfamily. CMGC Ser/Thr protein kinase family. MNB/DYRK subfamily. In terms of assembly, interacts with SIRT1. It depends on Mg(2+) as a cofactor. Protein kinase activity is activated following autophosphorylation at Tyr-349. Autophosphorylation at Ser-330 stabilizes the protein and enhances the protein kinase activity. Post-translationally, ubiquitinated at anaphase by the anaphase-promoting complex (APC/C), leading to its degradation by the proteasome.

Its subcellular location is the nucleus. It localises to the cytoplasm. The protein resides in the nucleus speckle. It is found in the cytoplasmic granule. The protein localises to the cytoskeleton. Its subcellular location is the microtubule organizing center. It localises to the centrosome. The enzyme catalyses L-seryl-[protein] + ATP = O-phospho-L-seryl-[protein] + ADP + H(+). It catalyses the reaction L-threonyl-[protein] + ATP = O-phospho-L-threonyl-[protein] + ADP + H(+). It carries out the reaction L-tyrosyl-[protein] + ATP = O-phospho-L-tyrosyl-[protein] + ADP + H(+). Protein kinase activity is activated following autophosphorylation at Tyr-349. Functionally, dual-specificity protein kinase that promotes disassembly of several types of membraneless organelles during mitosis, such as stress granules, nuclear speckles and pericentriolar material. Dual-specificity tyrosine-regulated kinases (DYRKs) autophosphorylate a critical tyrosine residue in their activation loop and phosphorylate their substrate on serine and threonine residues. Acts as a central dissolvase of membraneless organelles during the G2-to-M transition, after the nuclear-envelope breakdown: acts by mediating phosphorylation of multiple serine and threonine residues in unstructured domains of proteins, such as SRRM1 and PCM1. Does not mediate disassembly of all membraneless organelles: disassembly of P-body and nucleolus is not regulated by DYRK3. Dissolution of membraneless organelles at the onset of mitosis is also required to release mitotic regulators, such as ZNF207, from liquid-unmixed organelles where they are sequestered and keep them dissolved during mitosis. Regulates mTORC1 by mediating the dissolution of stress granules: during stressful conditions, DYRK3 partitions from the cytosol to the stress granule, together with mTORC1 components, which prevents mTORC1 signaling. When stress signals are gone, the kinase activity of DYRK3 is required for the dissolution of stress granule and mTORC1 relocation to the cytosol: acts by mediating the phosphorylation of the mTORC1 inhibitor AKT1S1, allowing full reactivation of mTORC1 signaling. Also acts as a negative regulator of EPO-dependent erythropoiesis: may place an upper limit on red cell production during stress erythropoiesis. Inhibits cell death due to cytokine withdrawal in hematopoietic progenitor cells. Promotes cell survival upon genotoxic stress through phosphorylation of SIRT1: this in turn inhibits p53/TP53 activity and apoptosis. The chain is Dual specificity tyrosine-phosphorylation-regulated kinase 3 from Macaca fascicularis (Crab-eating macaque).